Here is a 319-residue protein sequence, read N- to C-terminus: Putative peptide biosynthesis protein YydG (319 aa).

Positions 1–214 (MYNKTVSINL…HCPGYDIVYH (214 aa)) constitute a Radical SAM core domain. Residues Cys-14, Cys-18, and Cys-21 each contribute to the [4Fe-4S] cluster site.

The cofactor is [4Fe-4S] cluster.

Its function is as follows. Required for production of the modified peptide YydF. May activate a metalloenzyme (Potential). This Bacillus subtilis (strain 168) protein is Putative peptide biosynthesis protein YydG (yydG).